The following is a 173-amino-acid chain: Catabolic 3-dehydroquinase (173 aa).

Tyrosine 26 (proton acceptor) is an active-site residue. The substrate site is built by asparagine 102, histidine 108, and aspartate 115. Histidine 128 (proton donor) is an active-site residue. Substrate-binding positions include 129-130 and arginine 139; that span reads VS.

It belongs to the type-II 3-dehydroquinase family. As to quaternary structure, homododecamer. Adopts a ring-like structure, composed of an arrangement of two hexameric rings stacked on top of one another.

The catalysed reaction is 3-dehydroquinate = 3-dehydroshikimate + H2O. It participates in aromatic compound metabolism; 3,4-dihydroxybenzoate biosynthesis; 3,4-dihydroxybenzoate from 3-dehydroquinate: step 1/2. 3-dehydroquinate dehydratase; part of the qa gene cluster that mediates the catabolism of quinic acid (QA) and as such, allows the use of QA as a sole carbon source. Catalyzes the second reaction in the inducible quinic acid catabolic pathway by converting 3-dehydroquinate into 3-dehydroshikimate. The qa cluster encodes 3 inducible enymes (qa-2, qa-3 and qa-4) catalyzing the first three reactions in the catabolism of quinic acid to protocatechuic acid (also known as 3,4-Dihydroxybenzoic acid). The polypeptide is Catabolic 3-dehydroquinase (Neurospora crassa (strain ATCC 24698 / 74-OR23-1A / CBS 708.71 / DSM 1257 / FGSC 987)).